The primary structure comprises 202 residues: Nucleoid occlusion factor SlmA (202 aa).

The HTH tetR-type domain occupies 14–75; that stretch reads KERQQQVLEV…ALIERIEQTL (62 aa). The segment at residues 38 to 57 is a DNA-binding region (H-T-H motif); that stretch reads TTERLAKAVGVSEGALYRYF.

This sequence belongs to the nucleoid occlusion factor SlmA family. As to quaternary structure, homodimer. Interacts with FtsZ.

It localises to the cytoplasm. Its subcellular location is the nucleoid. Its function is as follows. Required for nucleoid occlusion (NO) phenomenon, which prevents Z-ring formation and cell division over the nucleoid. Acts as a DNA-associated cell division inhibitor that binds simultaneously chromosomal DNA and FtsZ, and disrupts the assembly of FtsZ polymers. SlmA-DNA-binding sequences (SBS) are dispersed on non-Ter regions of the chromosome, preventing FtsZ polymerization at these regions. The polypeptide is Nucleoid occlusion factor SlmA (Haemophilus ducreyi (strain 35000HP / ATCC 700724)).